Consider the following 338-residue polypeptide: tRNA N6-adenosine threonylcarbamoyltransferase (338 aa).

Residues H109 and H113 each coordinate Fe cation. Substrate contacts are provided by residues 132–136, D165, G178, and N277; that span reads AISGA. D302 contacts Fe cation.

Belongs to the KAE1 / TsaD family. The cofactor is Fe(2+).

The protein resides in the cytoplasm. The enzyme catalyses L-threonylcarbamoyladenylate + adenosine(37) in tRNA = N(6)-L-threonylcarbamoyladenosine(37) in tRNA + AMP + H(+). Required for the formation of a threonylcarbamoyl group on adenosine at position 37 (t(6)A37) in tRNAs that read codons beginning with adenine. Is involved in the transfer of the threonylcarbamoyl moiety of threonylcarbamoyl-AMP (TC-AMP) to the N6 group of A37, together with TsaE and TsaB. TsaD likely plays a direct catalytic role in this reaction. The protein is tRNA N6-adenosine threonylcarbamoyltransferase of Chlamydia trachomatis serovar A (strain ATCC VR-571B / DSM 19440 / HAR-13).